A 557-amino-acid chain; its full sequence is Urocanate hydratase (557 aa).

The disordered stretch occupies residues 1 to 20; the sequence is MSNPRHNEREVRSPRGDELN. Residues 52 to 53, Q130, 176 to 178, E196, R201, 242 to 243, 263 to 267, 273 to 274, and Y322 contribute to the NAD(+) site; these read GG, GMG, NA, QTSAH, and YL. C410 is a catalytic residue. An NAD(+)-binding site is contributed by G492.

It belongs to the urocanase family. NAD(+) serves as cofactor.

It localises to the cytoplasm. It carries out the reaction 4-imidazolone-5-propanoate = trans-urocanate + H2O. Its pathway is amino-acid degradation; L-histidine degradation into L-glutamate; N-formimidoyl-L-glutamate from L-histidine: step 2/3. Its function is as follows. Catalyzes the conversion of urocanate to 4-imidazolone-5-propionate. This Brucella melitensis biotype 1 (strain ATCC 23456 / CCUG 17765 / NCTC 10094 / 16M) protein is Urocanate hydratase.